We begin with the raw amino-acid sequence, 79 residues long: Small ribosomal subunit protein bS20 (79 aa).

Belongs to the bacterial ribosomal protein bS20 family.

In terms of biological role, binds directly to 16S ribosomal RNA. In Karelsulcia muelleri (strain GWSS) (Sulcia muelleri), this protein is Small ribosomal subunit protein bS20.